The chain runs to 309 residues: THAP domain-containing protein 7 (309 aa).

The THAP-type zinc finger occupies 1–93; it reads MPRHCSAAGC…LKEGAVPTIF (93 aa). The residue at position 162 (S162) is a Phosphoserine. The disordered stretch occupies residues 176–210; that stretch reads SDLLGPLGAQADEAGCSTQPSPEQHPSPLEPQPAS. The segment covering 198-209 has biased composition (pro residues); sequence EQHPSPLEPQPA. S210 is subject to Phosphoserine. An HCFC1-binding motif (HBM) motif is present at residues 229–232; sequence EHSY.

In terms of assembly, forms homodimers. Interacts with HDAC3 and nuclear hormone receptor corepressors. Interacts via HBM with HCFC1.

It localises to the nucleus. The protein resides in the chromosome. In terms of biological role, chromatin-associated, histone tail-binding protein that represses transcription via recruitment of HDAC3 and nuclear hormone receptor corepressors. This Mus musculus (Mouse) protein is THAP domain-containing protein 7 (Thap7).